The chain runs to 515 residues: Sodium/hydrogen exchanger 9B1 (515 aa).

Over residues 1–10 (MHTTESKNEH) the composition is skewed to basic and acidic residues. The tract at residues 1-32 (MHTTESKNEHLEDENFQTSTTPQSLIDPNNTA) is disordered. Residues 16–32 (FQTSTTPQSLIDPNNTA) show a composition bias toward polar residues. Helical transmembrane passes span 66–86 (VIIT…SILG), 95–115 (LFGL…LQLI), 116–136 (RIPL…GFTI), 152–172 (WSSI…GLGL), 187–207 (LAVG…HFIM), 215–235 (FLLG…YMMV), 260–280 (ILAI…GGIL), 284–304 (IASI…GFFV), 337–357 (IGLH…AGTK), 368–388 (IITT…GAEV), 407–427 (LALC…GFSF), 431–451 (IFIA…GPLA), and 472–492 (VAFL…GILG).

This sequence belongs to the monovalent cation:proton antiporter 1 (CPA1) transporter (TC 2.A.36) family. As to expression, expressed only in the testis.

It is found in the cell projection. Its subcellular location is the cilium. The protein localises to the flagellum membrane. Sperm-specific Na(+)/H(+) exchanger involved in intracellular pH regulation of spermatozoa. Involved in sperm motility and fertility. The sequence is that of Sodium/hydrogen exchanger 9B1 from Homo sapiens (Human).